The sequence spans 380 residues: All-trans-retinol dehydrogenase [NAD(+)] ADH4 (380 aa).

C47 contacts Zn(2+). Residue 48-49 (HT) coordinates NAD(+). H69, C99, C102, C105, and C113 together coordinate Zn(2+). S121 is modified (phosphoserine). C180 is a binding site for Zn(2+). Residues 205–210 (GLGGVG), D229, and K234 each bind NAD(+). S278 carries the post-translational modification Phosphoserine. NAD(+) is bound by residues 298–300 (IGV), 323–325 (TFF), and R375.

It belongs to the zinc-containing alcohol dehydrogenase family. Class-II subfamily. In terms of assembly, homodimer. Zn(2+) is required as a cofactor.

The protein resides in the cytoplasm. It catalyses the reaction all-trans-retinol + NAD(+) = all-trans-retinal + NADH + H(+). The enzyme catalyses 9-cis-retinol + NAD(+) = 9-cis-retinal + NADH + H(+). The catalysed reaction is 20-oxo-(5Z,8Z,11Z,14Z)-eicosatetraenoate + NAD(+) + H2O = (5Z,8Z,11Z,14Z)-eicosatetraenedioate + NADH + 2 H(+). It carries out the reaction 20-hydroxy-(5Z,8Z,11Z,14Z)-eicosatetraenoate + NAD(+) = 20-oxo-(5Z,8Z,11Z,14Z)-eicosatetraenoate + NADH + H(+). It catalyses the reaction 1,4-benzoquinone + NADH + H(+) = hydroquinone + NAD(+). Oxydation of 20-HETE is inhibited by low concentrations of N-heptylformamide. Oxydation of 20-HETE is a decreased by 55-65% by either all-trans-retinol or all-trans-retinoic acid. Strongly inhibited by omega-hydroxy fatty acids. In terms of biological role, catalyzes the NAD-dependent oxidation of either all-trans-retinol or 9-cis-retinol. Also oxidizes long chain omega-hydroxy fatty acids, such as 20-HETE, producing both the intermediate aldehyde, 20-oxoarachidonate and the end product, a dicarboxylic acid, (5Z,8Z,11Z,14Z)-eicosatetraenedioate. Also catalyzes the reduction of benzoquinones. The chain is All-trans-retinol dehydrogenase [NAD(+)] ADH4 from Homo sapiens (Human).